The chain runs to 122 residues: Fluoride-specific ion channel FluC 2 (122 aa).

4 helical membrane passes run 1-21 (MAWL…FLLS), 33-53 (PLGT…LLAL), 62-82 (VTLA…TFTY), and 102-122 (GSIL…GSLF). Na(+)-binding residues include Gly72 and Thr75.

It belongs to the fluoride channel Fluc/FEX (TC 1.A.43) family.

It is found in the cell membrane. The catalysed reaction is fluoride(in) = fluoride(out). Its activity is regulated as follows. Na(+) is not transported, but it plays an essential structural role and its presence is essential for fluoride channel function. Fluoride-specific ion channel. Important for reducing fluoride concentration in the cell, thus reducing its toxicity. The protein is Fluoride-specific ion channel FluC 2 of Moorella thermoacetica (strain ATCC 39073 / JCM 9320).